A 189-amino-acid chain; its full sequence is Large ribosomal subunit protein eL14 (189 aa).

This sequence belongs to the eukaryotic ribosomal protein eL14 family.

Its function is as follows. Component of the large ribosomal subunit. The ribosome is a large ribonucleoprotein complex responsible for the synthesis of proteins in the cell. This chain is Large ribosomal subunit protein eL14, found in Trypanosoma brucei brucei.